Reading from the N-terminus, the 101-residue chain is Vacuolar ATPase assembly integral membrane protein VMA21 (101 aa).

Residues 1-25 (MERPDKAALNALQPPEFRNESSLAS) lie on the Cytoplasmic side of the membrane. Residues 26 to 46 (TLKTLLFFTALMITVPIGLYF) traverse the membrane as a helical segment. Topologically, residues 47–65 (TTKSYIFEGALGMSNRDSY) are lumenal. A helical membrane pass occupies residues 66–86 (FYAAIVAVVAVHVVLALFVYV). Over 87 to 101 (AWNEGSRQWREGKQD) the chain is Cytoplasmic.

It belongs to the VMA21 family. In terms of assembly, associates with the V0 complex of the vacuolar ATPase (V-ATPase). Interacts with ATP6AP2.

Its subcellular location is the endoplasmic reticulum membrane. The protein localises to the endoplasmic reticulum-Golgi intermediate compartment membrane. It is found in the cytoplasmic vesicle. The protein resides in the COPII-coated vesicle membrane. Its function is as follows. Required for the assembly of the V0 complex of the vacuolar ATPase (V-ATPase) in the endoplasmic reticulum. The protein is Vacuolar ATPase assembly integral membrane protein VMA21 of Homo sapiens (Human).